The sequence spans 312 residues: Olfactory receptor 2M5 (312 aa).

Residues 1–25 (MAWENQTFNSDFILLGIFNHSPTHT) are Extracellular-facing. Asn-5 carries an N-linked (GlcNAc...) asparagine glycan. A helical transmembrane segment spans residues 26-49 (FLFFLVLAIFSVAFMGNSVMVLLI). Residues 50–57 (YLDTQLHT) lie on the Cytoplasmic side of the membrane. A helical membrane pass occupies residues 58–79 (PMYFLLSQLFLMDLMLICSTVP). Residues 80–100 (KMAFNYLSGSKSISMAGCATQ) lie on the Extracellular side of the membrane. An intrachain disulfide couples Cys-97 to Cys-189. A helical membrane pass occupies residues 101–120 (IFFYVSLLGSECFLLAVMSY). Topologically, residues 121-139 (DRYIAICHPLRYTNLMRPK) are cytoplasmic. The helical transmembrane segment at 140–158 (ICGLMTAFSWILGSMDAII) threads the bilayer. Topologically, residues 159 to 195 (DAVATFSFSYCGSREIAHFFCDFPSLLILSCNDTSIF) are extracellular. Residues 196–219 (EKVLFICCIVMIVFPVAIIIASYA) form a helical membrane-spanning segment. Residues 220-236 (RVILAVIHMGSGEGRRK) are Cytoplasmic-facing. A helical transmembrane segment spans residues 237–259 (AFTTCSSHLMVVGMYYGAGLFMY). The Extracellular portion of the chain corresponds to 260–272 (IRPTSDRSPMQDK). A helical transmembrane segment spans residues 273–292 (LVSVFYTILTPMLNPLIYSL). The Cytoplasmic segment spans residues 293 to 311 (RNKEVTRALRKVLGKGKCG).

The protein belongs to the G-protein coupled receptor 1 family.

Its subcellular location is the cell membrane. Functionally, odorant receptor. The sequence is that of Olfactory receptor 2M5 (OR2M5) from Homo sapiens (Human).